Consider the following 120-residue polypeptide: Large ribosomal subunit protein uL18 (120 aa).

Positions 1 to 10 (MSTPRKEQTQ) are enriched in basic and acidic residues. The tract at residues 1–25 (MSTPRKEQTQKRHRRLRRHLEGTPE) is disordered.

This sequence belongs to the universal ribosomal protein uL18 family. Part of the 50S ribosomal subunit; part of the 5S rRNA/L5/L18/L25 subcomplex. Contacts the 5S and 23S rRNAs.

Functionally, this is one of the proteins that bind and probably mediate the attachment of the 5S RNA into the large ribosomal subunit, where it forms part of the central protuberance. This is Large ribosomal subunit protein uL18 from Synechococcus sp. (strain RCC307).